The sequence spans 396 residues: Ribosomal RNA large subunit methyltransferase G (396 aa).

It belongs to the methyltransferase superfamily. RlmG family.

The protein localises to the cytoplasm. The catalysed reaction is guanosine(1835) in 23S rRNA + S-adenosyl-L-methionine = N(2)-methylguanosine(1835) in 23S rRNA + S-adenosyl-L-homocysteine + H(+). Functionally, specifically methylates the guanine in position 1835 (m2G1835) of 23S rRNA. The polypeptide is Ribosomal RNA large subunit methyltransferase G (Yersinia enterocolitica serotype O:8 / biotype 1B (strain NCTC 13174 / 8081)).